A 209-amino-acid chain; its full sequence is Ubiquitin-conjugating enzyme E2 S (209 aa).

One can recognise a UBC core domain in the interval 14 to 160 (QTIRQVMREL…ARMMTEIHAQ (147 aa)). Residue cysteine 98 is the Glycyl thioester intermediate of the active site. Positions 162–209 (AKCGAGAHGDDKDDDGPSTKKHAGLDKKLQDKKKEKLLKEKKRMLKRL) are disordered. Basic and acidic residues predominate over residues 169-199 (HGDDKDDDGPSTKKHAGLDKKLQDKKKEKLL). A compositionally biased stretch (basic residues) spans 200-209 (KEKKRMLKRL).

It belongs to the ubiquitin-conjugating enzyme family.

It catalyses the reaction S-ubiquitinyl-[E1 ubiquitin-activating enzyme]-L-cysteine + [E2 ubiquitin-conjugating enzyme]-L-cysteine = [E1 ubiquitin-activating enzyme]-L-cysteine + S-ubiquitinyl-[E2 ubiquitin-conjugating enzyme]-L-cysteine.. The protein operates within protein modification; protein ubiquitination. In terms of biological role, catalyzes the covalent attachment of ubiquitin to other proteins. Acts as an essential factor of the anaphase promoting complex/cyclosome (APC/C), a cell cycle-regulated ubiquitin ligase that controls progression through mitosis. Acts by specifically elongating polyubiquitin chains initiated by the E2 enzyme vih/UbcH10 on APC/C substrates, enhancing the degradation of APC/C substrates by the proteasome and promoting mitotic exit. This is Ubiquitin-conjugating enzyme E2 S from Drosophila erecta (Fruit fly).